A 393-amino-acid polypeptide reads, in one-letter code: Acetate kinase (393 aa).

A Mg(2+)-binding site is contributed by Asn7. ATP is bound at residue Lys14. Arg87 serves as a coordination point for substrate. The active-site Proton donor/acceptor is the Asp144. ATP-binding positions include 202-206 (HIGNG), 277-279 (DLR), and 326-330 (GVGEN). Position 380 (Glu380) interacts with Mg(2+).

It belongs to the acetokinase family. As to quaternary structure, homodimer. It depends on Mg(2+) as a cofactor. Mn(2+) is required as a cofactor.

The protein localises to the cytoplasm. It carries out the reaction acetate + ATP = acetyl phosphate + ADP. It participates in metabolic intermediate biosynthesis; acetyl-CoA biosynthesis; acetyl-CoA from acetate: step 1/2. In terms of biological role, catalyzes the formation of acetyl phosphate from acetate and ATP. Can also catalyze the reverse reaction. This chain is Acetate kinase, found in Mycoplasmopsis pulmonis (strain UAB CTIP) (Mycoplasma pulmonis).